The sequence spans 658 residues: Pentatricopeptide repeat-containing protein 7, mitochondrial (658 aa).

The N-terminal 29 residues, 1 to 29, are a transit peptide targeting the mitochondrion; sequence MRNCVSPLLFAWTKHLRLREFKIPFPNRL. PPR repeat units lie at residues 130 to 164 and 220 to 254; these read VKKR…TPIW and LYVE…SESL.

It is found in the mitochondrion. Functionally, mitochondrial RNA-binding protein required for the stability of the atp6 mRNA. The chain is Pentatricopeptide repeat-containing protein 7, mitochondrial (ppr7) from Schizosaccharomyces pombe (strain 972 / ATCC 24843) (Fission yeast).